We begin with the raw amino-acid sequence, 142 residues long: Large ribosomal subunit protein uL13 (142 aa).

Belongs to the universal ribosomal protein uL13 family. Part of the 50S ribosomal subunit.

This protein is one of the early assembly proteins of the 50S ribosomal subunit, although it is not seen to bind rRNA by itself. It is important during the early stages of 50S assembly. This chain is Large ribosomal subunit protein uL13, found in Alcanivorax borkumensis (strain ATCC 700651 / DSM 11573 / NCIMB 13689 / SK2).